The following is a 349-amino-acid chain: Protein-glutamate methylesterase/protein-glutamine glutaminase (349 aa).

One can recognise a Response regulatory domain in the interval 5–122 (RVLCVDDSAL…REGMLAYSEL (118 aa)). Asp56 bears the 4-aspartylphosphate mark. One can recognise a CheB-type methylesterase domain in the interval 152–344 (LLSSEKLIAI…QRMLAQISSG (193 aa)). Active-site residues include Ser164, His190, and Asp286.

It belongs to the CheB family. Post-translationally, phosphorylated by CheA. Phosphorylation of the N-terminal regulatory domain activates the methylesterase activity.

The protein resides in the cytoplasm. The enzyme catalyses [protein]-L-glutamate 5-O-methyl ester + H2O = L-glutamyl-[protein] + methanol + H(+). It catalyses the reaction L-glutaminyl-[protein] + H2O = L-glutamyl-[protein] + NH4(+). Involved in chemotaxis. Part of a chemotaxis signal transduction system that modulates chemotaxis in response to various stimuli. Catalyzes the demethylation of specific methylglutamate residues introduced into the chemoreceptors (methyl-accepting chemotaxis proteins or MCP) by CheR. Also mediates the irreversible deamidation of specific glutamine residues to glutamic acid. In Yersinia pestis bv. Antiqua (strain Antiqua), this protein is Protein-glutamate methylesterase/protein-glutamine glutaminase.